Reading from the N-terminus, the 669-residue chain is Probable ferric reductase transmembrane component (669 aa).

A disordered region spans residues 17–86; the sequence is FKTNGTEYAK…SGKGNSGTST (70 aa). Residues Asn-20, Asn-52, Asn-64, and Asn-116 are each glycosylated (N-linked (GlcNAc...) asparagine). The segment covering 28-86 has biased composition (low complexity); that stretch reads TTKSSSGSKTSTSASKSSKSTGSSNASKSSTNAHGSNSSTSSTSSSSSKSGKGNSGTST. A helical membrane pass occupies residues 122-142; that stretch reads GSGLLGYWAGILAIAIFANMI. Asn-152 carries N-linked (GlcNAc...) asparagine glycosylation. 5 helical membrane passes run 198 to 218, 234 to 254, 281 to 301, 313 to 333, and 340 to 360; these read IIVV…IHHV, LIAD…ILFG, VDVL…KATG, IWGT…MLFF, and VFFL…YYHL. A Ferric oxidoreductase domain is found at 239-373; the sequence is TGILGTFLIP…GYGDFMWAAI (135 aa). The region spanning 374-492 is the FAD-binding FR-type domain; it reads AVWAFDRVVR…EGPYGEPSSA (119 aa). Residue 437-442 participates in FAD binding; sequence HPFTFT. The helical transmembrane segment at 499–519 threads the bilayer; sequence VVFVAGGNGIPGIYSECVDLA. N-linked (GlcNAc...) asparagine glycosylation is found at Asn-524 and Asn-653.

This sequence belongs to the ferric reductase (FRE) family. FAD serves as cofactor.

Its subcellular location is the membrane. The catalysed reaction is 2 a Fe(II)-siderophore + NAD(+) + H(+) = 2 a Fe(III)-siderophore + NADH. The sequence is that of Probable ferric reductase transmembrane component (CFL1) from Candida albicans (Yeast).